Reading from the N-terminus, the 377-residue chain is Succinyl-diaminopimelate desuccinylase (377 aa).

A Zn(2+)-binding site is contributed by His-67. The active site involves Asp-69. Asp-100 serves as a coordination point for Zn(2+). Glu-134 acts as the Proton acceptor in catalysis. Positions 135, 163, and 349 each coordinate Zn(2+).

It belongs to the peptidase M20A family. DapE subfamily. As to quaternary structure, homodimer. Zn(2+) is required as a cofactor. The cofactor is Co(2+).

It carries out the reaction N-succinyl-(2S,6S)-2,6-diaminopimelate + H2O = (2S,6S)-2,6-diaminopimelate + succinate. It participates in amino-acid biosynthesis; L-lysine biosynthesis via DAP pathway; LL-2,6-diaminopimelate from (S)-tetrahydrodipicolinate (succinylase route): step 3/3. Its function is as follows. Catalyzes the hydrolysis of N-succinyl-L,L-diaminopimelic acid (SDAP), forming succinate and LL-2,6-diaminopimelate (DAP), an intermediate involved in the bacterial biosynthesis of lysine and meso-diaminopimelic acid, an essential component of bacterial cell walls. This Buchnera aphidicola subsp. Baizongia pistaciae (strain Bp) protein is Succinyl-diaminopimelate desuccinylase.